The primary structure comprises 201 residues: uncharacterized protein (201 aa).

Residues 53-74 (PKKNTAHKNSTTSTVASSGNTT) form a disordered region. A compositionally biased stretch (polar residues) spans 59 to 74 (HKNSTTSTVASSGNTT). Positions 88 to 136 (AKRLSHKEVERRRREAISEGIKELANIVPGCEKNKGSILQRTAQYIRSL) constitute a bHLH domain.

The protein localises to the nucleus. This is an uncharacterized protein from Schizosaccharomyces pombe (strain 972 / ATCC 24843) (Fission yeast).